The sequence spans 82 residues: MKTLLLTLVVVTIVCLDLGYTRKCHNSPLSLVYQTCPIGQNICFKINVKEAPSIPVKRACAATCPKSSALVKVVCCKTDKCN.

Positions 1–21 (MKTLLLTLVVVTIVCLDLGYT) are cleaved as a signal peptide. Intrachain disulfides connect Cys-24-Cys-43, Cys-36-Cys-60, Cys-64-Cys-75, and Cys-76-Cys-81.

Belongs to the three-finger toxin family. Short-chain subfamily. Orphan group XV sub-subfamily. Expressed by the venom gland.

Its subcellular location is the secreted. It localises to the target cell membrane. Its function is as follows. Has low cytotoxic activity. In Naja atra (Chinese cobra), this protein is Cytotoxin homolog Clbp-3.